Reading from the N-terminus, the 327-residue chain is Porphobilinogen deaminase (327 aa).

An S-(dipyrrolylmethanemethyl)cysteine modification is found at Cys-250.

It belongs to the HMBS family. As to quaternary structure, monomer. Dipyrromethane is required as a cofactor.

It catalyses the reaction 4 porphobilinogen + H2O = hydroxymethylbilane + 4 NH4(+). The protein operates within porphyrin-containing compound metabolism; protoporphyrin-IX biosynthesis; coproporphyrinogen-III from 5-aminolevulinate: step 2/4. Its function is as follows. Tetrapolymerization of the monopyrrole PBG into the hydroxymethylbilane pre-uroporphyrinogen in several discrete steps. The protein is Porphobilinogen deaminase of Paraburkholderia phymatum (strain DSM 17167 / CIP 108236 / LMG 21445 / STM815) (Burkholderia phymatum).